We begin with the raw amino-acid sequence, 247 residues long: Type II restriction enzyme SmaI (247 aa).

Mg(2+) is required as a cofactor. Requires K(+) as cofactor.

It catalyses the reaction Endonucleolytic cleavage of DNA to give specific double-stranded fragments with terminal 5'-phosphates.. A P subtype restriction enzyme that recognizes the double-stranded sequence 5'-CCCGGG-3' and cleaves after C-3. In Serratia marcescens, this protein is Type II restriction enzyme SmaI (smaIR).